The sequence spans 145 residues: Large ribosomal subunit protein bL19 (145 aa).

Residues 114 to 136 (IAEKMESPAAKATREAAKKEAKA) are compositionally biased toward basic and acidic residues. A disordered region spans residues 114-145 (IAEKMESPAAKATREAAKKEAKAAKKNAAPAE).

The protein belongs to the bacterial ribosomal protein bL19 family.

This protein is located at the 30S-50S ribosomal subunit interface and may play a role in the structure and function of the aminoacyl-tRNA binding site. The sequence is that of Large ribosomal subunit protein bL19 from Methylocella silvestris (strain DSM 15510 / CIP 108128 / LMG 27833 / NCIMB 13906 / BL2).